Here is a 212-residue protein sequence, read N- to C-terminus: Uridine kinase (212 aa).

ATP is bound at residue 13–20; that stretch reads GASASGKS.

This sequence belongs to the uridine kinase family.

It is found in the cytoplasm. It catalyses the reaction uridine + ATP = UMP + ADP + H(+). The enzyme catalyses cytidine + ATP = CMP + ADP + H(+). The protein operates within pyrimidine metabolism; CTP biosynthesis via salvage pathway; CTP from cytidine: step 1/3. Its pathway is pyrimidine metabolism; UMP biosynthesis via salvage pathway; UMP from uridine: step 1/1. This chain is Uridine kinase, found in Shewanella piezotolerans (strain WP3 / JCM 13877).